The sequence spans 309 residues: Sulfate adenylyltransferase subunit 2 (309 aa).

It belongs to the PAPS reductase family. CysD subfamily. Heterodimer composed of CysD, the smaller subunit, and CysN.

The catalysed reaction is sulfate + ATP + H(+) = adenosine 5'-phosphosulfate + diphosphate. It functions in the pathway sulfur metabolism; hydrogen sulfide biosynthesis; sulfite from sulfate: step 1/3. Its function is as follows. With CysN forms the ATP sulfurylase (ATPS) that catalyzes the adenylation of sulfate producing adenosine 5'-phosphosulfate (APS) and diphosphate, the first enzymatic step in sulfur assimilation pathway. APS synthesis involves the formation of a high-energy phosphoric-sulfuric acid anhydride bond driven by GTP hydrolysis by CysN coupled to ATP hydrolysis by CysD. This Mycobacterium sp. (strain JLS) protein is Sulfate adenylyltransferase subunit 2.